Consider the following 472-residue polypeptide: Putative ankyrin repeat protein L675 (472 aa).

ANK repeat units lie at residues 125 to 156 (YKAN…DIHL), 187 to 216 (DNFK…NETI), 265 to 295 (YKTK…DKDI), 297 to 323 (HAML…NIHY), 325 to 351 (NDQA…GMDS), 352 to 381 (NNVF…DVNA), 382 to 411 (NNRS…DIKI), and 413 to 440 (DTVI…SCDD).

This is Putative ankyrin repeat protein L675 from Acanthamoeba polyphaga (Amoeba).